A 520-amino-acid polypeptide reads, in one-letter code: Versicolorin B desaturase (520 aa).

A helical membrane pass occupies residues 22 to 42 (IFTTILSIFGIALSAVAAWGI). N-linked (GlcNAc...) asparagine glycans are attached at residues Asn-266 and Asn-426. Cys-462 is a binding site for heme.

The protein belongs to the cytochrome P450 family. Heme is required as a cofactor.

The protein localises to the membrane. The catalysed reaction is versicolorin B + NADPH + O2 + H(+) = versicolorin A + NADP(+) + 2 H2O. The protein operates within mycotoxin biosynthesis. Versicolorin B desaturase; part of the fragmented gene cluster that mediates the biosynthesis of dothistromin (DOTH), a polyketide toxin very similar in structure to the aflatoxin precursor, versicolorin B. The first step of the pathway is the conversion of acetate to norsolorinic acid (NOR) and requires the fatty acid synthase subunits hexA and hexB, as well as the polyketide synthase pksA. PksA combines a hexanoyl starter unit and 7 malonyl-CoA extender units to synthesize the precursor NOR. The hexanoyl starter unit is provided to the acyl-carrier protein (ACP) domain by the fungal fatty acid synthase hexA/hexB. The second step is the conversion of NOR to averantin (AVN) and requires the norsolorinic acid ketoreductase nor1, which catalyzes the dehydration of norsolorinic acid to form (1'S)-averantin. The cytochrome P450 monooxygenase avnA then catalyzes the hydroxylation of AVN to 5'hydroxyaverantin (HAVN). The next step is performed by adhA that transforms HAVN to averufin (AVF). Averufin might then be converted to hydroxyversicolorone by cypX and avfA. Hydroxyversicolorone is further converted versiconal hemiacetal acetate (VHA) by moxY. VHA is then the substrate for the versiconal hemiacetal acetate esterase est1 to yield versiconal (VAL). Versicolorin B synthase vbsA then converts VAL to versicolorin B (VERB) by closing the bisfuran ring. Then, the activity of the versicolorin B desaturase verB leads to versicolorin A (VERA). DotB, a predicted chloroperoxidase, may perform epoxidation of the A-ring of VERA. Alternatively, a cytochrome P450, such as cypX or avnA could catalyze this step. It is also possible that another, uncharacterized, cytochrome P450 enzyme is responsible for this step. Opening of the epoxide could potentially be achieved by the epoxide hydrolase epoA. However, epoA seems not to be required for DOTH biosynthesis, but other epoxide hydrolases may have the ability to complement this hydrolysis. Alternatively, opening of the epoxide ring could be achieved non-enzymatically. The next step is the deoxygenation of ring A to yield the 5,8-dihydroxyanthraquinone which is most likely catalyzed by the NADPH dehydrogenase encoded by ver1. The last stages of DOTH biosynthesis are proposed to involve hydroxylation of the bisfuran. OrdB and norB might have oxidative roles here. An alternative possibility is that cytochrome P450 monoogenases such as avnA and cypX might perform these steps in addition to previously proposed steps. This is Versicolorin B desaturase from Dothistroma septosporum (strain NZE10 / CBS 128990) (Red band needle blight fungus).